Here is a 221-residue protein sequence, read N- to C-terminus: D-glycero-alpha-D-manno-heptose 1-phosphate guanylyltransferase (221 aa).

Belongs to the D-alpha-D-heptose-1-P guanylyltransferase family.

The enzyme catalyses D-glycero-alpha-D-manno-heptose 1-phosphate + GTP + H(+) = GDP-D-glycero-alpha-D-manno-heptose + diphosphate. Its pathway is nucleotide-sugar biosynthesis; GDP-D-glycero-alpha-D-manno-heptose biosynthesis; GDP-D-glycero-alpha-D-manno-heptose from D-glycero-alpha-D-manno-heptose 7-phosphate: step 3/3. It functions in the pathway capsule biogenesis; capsule polysaccharide biosynthesis. Its function is as follows. Catalyzes the GDP transfer from GTP to D-glycero-alpha-D-manno-heptose 1-phosphate, yielding GDP-D-alpha-D-heptose. Is able to use ATP, CTP or UTP as substrate in the presence of pyrophosphatase, but at a significantly slower rate. Can also form GDP-alpha-D-mannose from alpha-D-mannose 1-phosphate and GTP. This chain is D-glycero-alpha-D-manno-heptose 1-phosphate guanylyltransferase, found in Campylobacter jejuni subsp. jejuni serotype O:2 (strain ATCC 700819 / NCTC 11168).